The sequence spans 79 residues: Large ribosomal subunit protein bL31 (79 aa).

This sequence belongs to the bacterial ribosomal protein bL31 family. Type A subfamily. In terms of assembly, part of the 50S ribosomal subunit.

Binds the 23S rRNA. In Trichormus variabilis (strain ATCC 29413 / PCC 7937) (Anabaena variabilis), this protein is Large ribosomal subunit protein bL31.